Here is a 504-residue protein sequence, read N- to C-terminus: Maturase K (504 aa).

Belongs to the intron maturase 2 family. MatK subfamily.

The protein localises to the plastid. It is found in the chloroplast. Usually encoded in the trnK tRNA gene intron. Probably assists in splicing its own and other chloroplast group II introns. The sequence is that of Maturase K from Kokia drynarioides (Hawaiian tree cotton).